A 160-amino-acid chain; its full sequence is NADH-quinone oxidoreductase subunit I (160 aa).

4Fe-4S ferredoxin-type domains lie at 51–81 (LRRY…IEAA) and 91–120 (VRYD…EGPN). [4Fe-4S] cluster is bound by residues Cys61, Cys64, Cys67, Cys71, Cys100, Cys103, Cys106, and Cys110.

This sequence belongs to the complex I 23 kDa subunit family. NDH-1 is composed of 14 different subunits. Subunits NuoA, H, J, K, L, M, N constitute the membrane sector of the complex. Requires [4Fe-4S] cluster as cofactor.

The protein localises to the cell inner membrane. It carries out the reaction a quinone + NADH + 5 H(+)(in) = a quinol + NAD(+) + 4 H(+)(out). In terms of biological role, NDH-1 shuttles electrons from NADH, via FMN and iron-sulfur (Fe-S) centers, to quinones in the respiratory chain. The immediate electron acceptor for the enzyme in this species is believed to be ubiquinone. Couples the redox reaction to proton translocation (for every two electrons transferred, four hydrogen ions are translocated across the cytoplasmic membrane), and thus conserves the redox energy in a proton gradient. The protein is NADH-quinone oxidoreductase subunit I of Anaplasma marginale (strain St. Maries).